A 45-amino-acid polypeptide reads, in one-letter code: DNA-directed RNA polymerase subunit Rpo12 (45 aa).

Zn(2+) contacts are provided by C8, C23, and C26.

It belongs to the archaeal Rpo12/eukaryotic RPC10 RNA polymerase subunit family. Part of the RNA polymerase complex. Zn(2+) is required as a cofactor.

It localises to the cytoplasm. The catalysed reaction is RNA(n) + a ribonucleoside 5'-triphosphate = RNA(n+1) + diphosphate. Functionally, DNA-dependent RNA polymerase (RNAP) catalyzes the transcription of DNA into RNA using the four ribonucleoside triphosphates as substrates. The sequence is that of DNA-directed RNA polymerase subunit Rpo12 from Methanothrix thermoacetophila (strain DSM 6194 / JCM 14653 / NBRC 101360 / PT) (Methanosaeta thermophila).